Here is a 182-residue protein sequence, read N- to C-terminus: PRA1 family protein D (182 aa).

A2 carries the N-acetylalanine modification. 3 helical membrane passes run 68–88 (LITR…WFFL), 107–127 (IVAV…GVWL), and 129–149 (ALTT…LRGT). The tract at residues 163 to 182 (PMLSTSGGGNDGARGDYSGI) is disordered.

It belongs to the PRA1 family. As to quaternary structure, interacts with PRA1F2 and PRA1F3. Interacts with the cauliflower mosaic virus (CaMV) movement protein (via N-terminus). Expressed in hypocotyls, roots, lateral roots, lateral root caps, columella cells, leaves, shoot apex, stems and flowers.

Its subcellular location is the endosome membrane. Functionally, may be involved in both secretory and endocytic intracellular trafficking in the endosomal/prevacuolar compartments. The sequence is that of PRA1 family protein D (PRA1D) from Arabidopsis thaliana (Mouse-ear cress).